The primary structure comprises 320 residues: uncharacterized protein (320 aa).

Residues 1–26 (MNHYDQYQKYKKKYLDLKNQLNNSSQ) are a coiled coil.

The protein localises to the virion. This is an uncharacterized protein from Acanthamoeba polyphaga mimivirus (APMV).